A 1390-amino-acid polypeptide reads, in one-letter code: Nuclear pore complex protein 14 (1390 aa).

Polar residues-rich tracts occupy residues 434 to 455 (SQKPISAPPSDQTPVTKPSTVF) and 464 to 521 (LKSS…STPK). Disordered regions lie at residues 434–530 (SQKP…KISD), 851–874 (PSSSLFSASPSTPSTKSDAATQAD), and 985–1118 (QEIE…SKAA). Over residues 851 to 864 (PSSSLFSASPSTPS) the composition is skewed to low complexity. Over residues 986–1033 (EIEKASSKVETLNKTEEVKDEKSENEVTPDLKSEEPKSLETKVKEEPK) the composition is skewed to basic and acidic residues. Over residues 1051 to 1071 (KTPSFSFNSTTTPKSTSSTSS) the composition is skewed to low complexity. The stretch at 1073–1074 (FG) is repeat 1. The interval 1073 to 1373 (FGGGLKTQTP…TPAPTSSVFG (301 aa)) is 17 X 2 AA repeats of F-G. Over residues 1078 to 1090 (KTQTPSSSNSTNI) the composition is skewed to polar residues. Residues 1091–1092 (FG) form repeat 2. A compositionally biased stretch (low complexity) spans 1095–1109 (TTTTATPTPASNTSS). A run of 6 repeats spans residues 1111 to 1112 (FG), 1122 to 1123 (FG), 1125 to 1126 (FG), 1163 to 1164 (FG), 1166 to 1167 (FG), and 1178 to 1179 (FG). Positions 1183 to 1280 (TAPTVPNVDD…QASAPATGTS (98 aa)) are disordered. Residues 1201 to 1210 (NGGGSGGFMS) show a composition bias toward gly residues. Residues 1231–1243 (TSTGTSASSSSWL) show a composition bias toward low complexity. Repeat 9 spans residues 1244 to 1245 (FG). The span at 1264–1280 (TAGSSAQQASAPATGTS) shows a compositional bias: low complexity. Repeat copies occupy residues 1283 to 1284 (FG), 1289 to 1290 (FG), 1295 to 1296 (FG), 1300 to 1301 (FG), 1315 to 1316 (FG), 1344 to 1345 (FG), 1357 to 1358 (FG), and 1372 to 1373 (FG). Residues 1342-1371 (SLFGGGATPQTNTSIFGGGANTTPAPTSSV) show a composition bias toward polar residues. Residues 1342–1390 (SLFGGGATPQTNTSIFGGGANTTPAPTSSVFGGGASANANKPTSFTSWR) are disordered. The segment covering 1378–1390 (ANANKPTSFTSWR) has biased composition (polar residues).

In terms of assembly, interacts with caspase ced-3 (via propeptide); the interaction tethers ced-3 to the nuclear membrane and prevents its autoprocessing in absence of ced-4.

It localises to the nucleus. The protein localises to the nuclear pore complex. It is found in the nucleus membrane. In terms of biological role, may serve as a docking site in the receptor-mediated import of substrates across the nuclear pore complex. Plays a role in apoptosis by tethering caspase ced-3 to the nuclear membrane preventing its autoprocessing in absence of ced-4. The protein is Nuclear pore complex protein 14 of Caenorhabditis elegans.